The sequence spans 623 residues: Leucine-rich repeat, immunoglobulin-like domain and transmembrane domain-containing protein 1 (623 aa).

The signal sequence occupies residues 1 to 21 (MRVALGMLWLLALAWPPQARG). The LRRNT domain maps to 22 to 59 (FCPSQCSCSLHIMGDGSKARTVVCNDPDMTLPPASIPP). Topologically, residues 22–526 (FCPSQCSCSL…EVVDAENTQQ (505 aa)) are lumenal. LRR repeat units lie at residues 60-81 (DTSR…AFRP), 84-105 (RLEQ…MLRG), 108-129 (RLRE…ALRD), 132-153 (KLRL…AARF), and 156-177 (NLTF…LIVS). N-linked (GlcNAc...) asparagine glycosylation occurs at N156. The 53-residue stretch at 201 to 253 (NPWACDCRLYDLVHLLDGWAPNLAFIETELRCASPRSLAGVAFSQLELRKCQG) folds into the LRRCT domain. The 70-residue stretch at 266-335 (LLGGTALLRC…YICQAKNFLG (70 aa)) folds into the Ig-like C2-type domain. The cysteines at positions 275 and 328 are disulfide-linked. N-linked (GlcNAc...) asparagine glycosylation is found at N296 and N455. The 89-residue stretch at 430-518 (MVRSVKVVGD…QCVIFSTNEV (89 aa)) folds into the Fibronectin type-III domain. The chain crosses the membrane as a helical span at residues 527–547 (LINVVVISVAIVIALPLTLLV). At 548-623 (CCSALQKRCR…GGRRINEYFC (76 aa)) the chain is on the cytoplasmic side. One copy of the LRR 6 repeat lies at 571-594 (YVNLERLGYSEDGLEELSRHSVSE).

As to quaternary structure, may form a homodimer. Interacts with LRIT2; may form a heterodimer with LRIT2. Interacts (via its N-terminal extracellular domain) with metabotropic glutamate receptor GRM6. Interacts (via its extreme C-terminus) with the scaffold protein FRMPD2 (via the third PDZ domain); the interaction leads to their colocalization in photoreceptor synapses.

The protein localises to the endoplasmic reticulum membrane. It localises to the cell projection. The protein resides in the dendrite. Its function is as follows. Photoreceptor synaptic protein essential for normal vision. Involved in synapse formation in cone photoreceptor cells. The chain is Leucine-rich repeat, immunoglobulin-like domain and transmembrane domain-containing protein 1 (LRIT1) from Homo sapiens (Human).